The primary structure comprises 124 residues: Large ribosomal subunit protein bL20c (124 aa).

This sequence belongs to the bacterial ribosomal protein bL20 family.

The protein localises to the plastid. Its subcellular location is the chloroplast. In terms of biological role, binds directly to 23S ribosomal RNA and is necessary for the in vitro assembly process of the 50S ribosomal subunit. It is not involved in the protein synthesizing functions of that subunit. In Stigeoclonium helveticum (Green alga), this protein is Large ribosomal subunit protein bL20c.